The following is a 52-amino-acid chain: Keratin-associated protein 19-2 (52 aa).

Belongs to the KRTAP type 19 family. As to quaternary structure, interacts with hair keratins.

Functionally, in the hair cortex, hair keratin intermediate filaments are embedded in an interfilamentous matrix, consisting of hair keratin-associated proteins (KRTAP), which are essential for the formation of a rigid and resistant hair shaft through their extensive disulfide bond cross-linking with abundant cysteine residues of hair keratins. The matrix proteins include the high-sulfur and high-glycine-tyrosine keratins. The protein is Keratin-associated protein 19-2 (KRTAP19-2) of Homo sapiens (Human).